The sequence spans 75 residues: Small ribosomal subunit protein bS21 (75 aa).

Belongs to the bacterial ribosomal protein bS21 family.

This Brucella abortus (strain S19) protein is Small ribosomal subunit protein bS21.